We begin with the raw amino-acid sequence, 480 residues long: Long-chain acyl-protein thioester reductase (480 aa).

This sequence belongs to the LuxC family.

The catalysed reaction is a long-chain fatty aldehyde + NADP(+) + CoA = a long-chain fatty acyl-CoA + NADPH + H(+). It functions in the pathway lipid metabolism; fatty acid reduction for biolumincescence. LuxC is the fatty acid reductase enzyme responsible for synthesis of the aldehyde substrate for the luminescent reaction catalyzed by luciferase. The protein is Long-chain acyl-protein thioester reductase (luxC) of Photorhabdus luminescens (Xenorhabdus luminescens).